The chain runs to 471 residues: Methylenetetrahydrofolate--tRNA-(uracil-5-)-methyltransferase TrmFO (471 aa).

13-18 is a binding site for FAD; it reads GGGLAG.

The protein belongs to the MnmG family. TrmFO subfamily. The cofactor is FAD.

It localises to the cytoplasm. The enzyme catalyses uridine(54) in tRNA + (6R)-5,10-methylene-5,6,7,8-tetrahydrofolate + NADH + H(+) = 5-methyluridine(54) in tRNA + (6S)-5,6,7,8-tetrahydrofolate + NAD(+). It catalyses the reaction uridine(54) in tRNA + (6R)-5,10-methylene-5,6,7,8-tetrahydrofolate + NADPH + H(+) = 5-methyluridine(54) in tRNA + (6S)-5,6,7,8-tetrahydrofolate + NADP(+). Functionally, catalyzes the folate-dependent formation of 5-methyl-uridine at position 54 (M-5-U54) in all tRNAs. This chain is Methylenetetrahydrofolate--tRNA-(uracil-5-)-methyltransferase TrmFO, found in Azorhizobium caulinodans (strain ATCC 43989 / DSM 5975 / JCM 20966 / LMG 6465 / NBRC 14845 / NCIMB 13405 / ORS 571).